We begin with the raw amino-acid sequence, 232 residues long: Large ribosomal subunit protein uL1 (232 aa).

The protein belongs to the universal ribosomal protein uL1 family. In terms of assembly, part of the 50S ribosomal subunit.

Its function is as follows. Binds directly to 23S rRNA. The L1 stalk is quite mobile in the ribosome, and is involved in E site tRNA release. Functionally, protein L1 is also a translational repressor protein, it controls the translation of the L11 operon by binding to its mRNA. This is Large ribosomal subunit protein uL1 from Porphyromonas gingivalis (strain ATCC 33277 / DSM 20709 / CIP 103683 / JCM 12257 / NCTC 11834 / 2561).